The following is a 307-amino-acid chain: Ribosomal RNA small subunit methyltransferase H (307 aa).

Residues 33 to 35 (GGY), D51, F82, D96, and Q103 each bind S-adenosyl-L-methionine.

Belongs to the methyltransferase superfamily. RsmH family.

It is found in the cytoplasm. It catalyses the reaction cytidine(1402) in 16S rRNA + S-adenosyl-L-methionine = N(4)-methylcytidine(1402) in 16S rRNA + S-adenosyl-L-homocysteine + H(+). Functionally, specifically methylates the N4 position of cytidine in position 1402 (C1402) of 16S rRNA. The protein is Ribosomal RNA small subunit methyltransferase H of Rickettsia peacockii (strain Rustic).